The sequence spans 1386 residues: X-linked retinitis pigmentosa GTPase regulator homolog (1386 aa).

Disordered stretches follow at residues 1–25 (MFFK…TSSE), 37–56 (AGAR…KARR), and 730–760 (MPQM…PEQH). Positions 9-25 (SRKTSANSSSDTSTSSE) are enriched in low complexity. Over residues 45–56 (SVHRQSGKKARR) the composition is skewed to basic residues. RCC1 repeat units lie at residues 737–787 (SKRS…VLSS), 788–838 (SGQL…FICS), 839–891 (DGSL…VLTD), and 893–943 (GRVL…CITE). A disordered region spans residues 972–994 (LKNTEDPSSPSPSTNGSTPRVNL). RCC1 repeat units follow at residues 1034 to 1085 (EGTL…ASTD) and 1087 to 1139 (GSVF…FVQK).

Its function is as follows. Could be a guanine-nucleotide releasing factor for glo-1. May play a role in gut granule biogenesis. Regulates axon termination in PLM and ALM neurons. The sequence is that of X-linked retinitis pigmentosa GTPase regulator homolog (glo-4) from Caenorhabditis elegans.